A 347-amino-acid polypeptide reads, in one-letter code: Eukaryotic translation initiation factor 3 subunit I (347 aa).

5 WD repeats span residues 8–47, 50–89, 150–190, 192–233, and 289–328; these read GHER…RLGT, DHSG…AVHS, EQAT…VQAK, IHEK…KTYK, and GHFG…FDFK.

Belongs to the eIF-3 subunit I family. As to quaternary structure, component of the eukaryotic translation initiation factor 3 (eIF-3) complex.

The protein localises to the cytoplasm. In terms of biological role, component of the eukaryotic translation initiation factor 3 (eIF-3) complex, which is involved in protein synthesis of a specialized repertoire of mRNAs and, together with other initiation factors, stimulates binding of mRNA and methionyl-tRNAi to the 40S ribosome. The eIF-3 complex specifically targets and initiates translation of a subset of mRNAs involved in cell proliferation. The chain is Eukaryotic translation initiation factor 3 subunit I from Kluyveromyces lactis (strain ATCC 8585 / CBS 2359 / DSM 70799 / NBRC 1267 / NRRL Y-1140 / WM37) (Yeast).